Consider the following 311-residue polypeptide: tRNA-cytidine(32) 2-sulfurtransferase (311 aa).

Positions 47 to 52 (SGGKDS) match the PP-loop motif motif. 3 residues coordinate [4Fe-4S] cluster: Cys122, Cys125, and Cys213.

This sequence belongs to the TtcA family. As to quaternary structure, homodimer. It depends on Mg(2+) as a cofactor. [4Fe-4S] cluster is required as a cofactor.

Its subcellular location is the cytoplasm. The enzyme catalyses cytidine(32) in tRNA + S-sulfanyl-L-cysteinyl-[cysteine desulfurase] + AH2 + ATP = 2-thiocytidine(32) in tRNA + L-cysteinyl-[cysteine desulfurase] + A + AMP + diphosphate + H(+). Its pathway is tRNA modification. Its function is as follows. Catalyzes the ATP-dependent 2-thiolation of cytidine in position 32 of tRNA, to form 2-thiocytidine (s(2)C32). The sulfur atoms are provided by the cysteine/cysteine desulfurase (IscS) system. This chain is tRNA-cytidine(32) 2-sulfurtransferase, found in Shigella flexneri serotype 5b (strain 8401).